Reading from the N-terminus, the 359-residue chain is DNA polymerase IV (359 aa).

In terms of domain architecture, UmuC spans 7 to 188 (IIHIDMDAFY…LPIGKFFGVG (182 aa)). Residues Asp11 and Asp106 each coordinate Mg(2+). Glu107 is an active-site residue.

It belongs to the DNA polymerase type-Y family. Monomer. Mg(2+) is required as a cofactor.

Its subcellular location is the cytoplasm. It carries out the reaction DNA(n) + a 2'-deoxyribonucleoside 5'-triphosphate = DNA(n+1) + diphosphate. Functionally, poorly processive, error-prone DNA polymerase involved in untargeted mutagenesis. Copies undamaged DNA at stalled replication forks, which arise in vivo from mismatched or misaligned primer ends. These misaligned primers can be extended by PolIV. Exhibits no 3'-5' exonuclease (proofreading) activity. May be involved in translesional synthesis, in conjunction with the beta clamp from PolIII. The chain is DNA polymerase IV from Clostridium perfringens (strain SM101 / Type A).